Consider the following 1844-residue polypeptide: ATPase family AAA domain-containing protein 5 (1844 aa).

Ser44 is subject to Phosphoserine. Lys127 is covalently cross-linked (Glycyl lysine isopeptide (Lys-Gly) (interchain with G-Cter in SUMO2)). Residues 178-199 are compositionally biased toward polar residues; it reads QPNTMTSLQNSKKVNPKQGTTK. The tract at residues 178–204 is disordered; the sequence is QPNTMTSLQNSKKVNPKQGTTKNDFKK. Phosphoserine is present on residues Ser219, Ser306, Ser311, Ser354, and Ser369. Residues 368–384 are interaction with WDR48; that stretch reads KSNVVIQEEELELAVLE. Disordered stretches follow at residues 477–499, 580–623, and 658–700; these read KLKK…REGN, ESEA…NSQL, and KFTR…SKNI. Polar residues-rich tracts occupy residues 580-592 and 599-608; these read ESEA…STPK and RISSTPTTET. Phosphoserine is present on residues Ser602, Ser614, and Ser621. Basic residues predominate over residues 664–673; it reads TPKKSKKKSN. A compositionally biased stretch (polar residues) spans 685–700; that stretch reads GFTSQIRKASNTSKNI. Ser817 carries the post-translational modification Phosphoserine. Composition is skewed to basic and acidic residues over residues 987–1032 and 1092–1106; these read LEAD…ELSK and RQNL…HEDF. Disordered regions lie at residues 987-1047 and 1092-1118; these read LEAD…SKDS and RQNL…SSDD. Ser1116 is subject to Phosphoserine. 1132 to 1139 is an ATP binding site; it reads GPTGVGKT. Disordered regions lie at residues 1203–1235 and 1272–1292; these read KKIS…LPPK and ITQT…GAEE. A compositionally biased stretch (polar residues) spans 1272–1285; it reads ITQTKSTNATNSNV. Positions 1428 to 1432 match the LXCXE motif motif; that stretch reads LVCSE. A disordered region spans residues 1591-1635; sequence SLSSVSSSSNAEESKTGDEESKARDKGNNPETKKSIPCPPKTTAG. Basic and acidic residues predominate over residues 1602–1624; it reads EESKTGDEESKARDKGNNPETKK. Residues 1630 to 1719 form an interaction with RAD51 and RFC5 region; it reads PKTTAGKKCS…AAAEALSFTK (90 aa).

The protein belongs to the AAA ATPase family. Component of a heteropentameric replication factor ATAD5 RFC-like complex composed of one large subunit (ATAD5) and four small subunits (RFC2, RFC3, RFC4 and RFC5). Within the ATAD5 RFC-like complex, interacts with RFC2, RFC4 and RFC5. Within the ATAD5 RFC-like complex, interacts directly via-N terminal with RAD51; the interactions is enhanced under replication stress. Interacts with RB1 predominantly in G1 phase via its LXCXE motif. Interacts with RAD9A in growing cells. The interaction with RAD9A is reduced after exposure to DNA replication-inhibiting agents. Interacts with BRD4. Interacts with PCNA. Interacts with deubiquitinating enzyme USP1, and its associated factor, WDR48. In terms of processing, ATR may stimulate the RAD9A dissociation.

It localises to the nucleus. Has an important role in DNA replication and in maintaining genome integrity during replication stress. Involved in a RAD9A-related damage checkpoint, a pathway that is important in determining whether DNA damage is compatible with cell survival or whether it requires cell elimination by apoptosis. Modulates the RAD9A interaction with BCL2 and thereby induces DNA damage-induced apoptosis. Promotes PCNA deubiquitination by recruiting the ubiquitin-specific protease 1 (USP1) and WDR48 thereby down-regulating the error-prone damage bypass pathway. As component of the ATAD5 RFC-like complex, regulates the function of the DNA polymerase processivity factor PCNA by unloading the ring-shaped PCNA homotrimer from DNA after replication during the S phase of the cell cycle. This seems to be dependent on its ATPase activity. Plays important roles in restarting stalled replication forks under replication stress, by unloading the PCNA homotrimer from DNA and recruiting RAD51 possibly through an ATR-dependent manner. Ultimately this enables replication fork regression, breakage, and eventual fork restart. Both the PCNA unloading activity and the interaction with WDR48 are required to efficiently recruit RAD51 to stalled replication forks. Promotes the generation of MUS81-mediated single-stranded DNA-associated breaks in response to replication stress, which is an alternative pathway to restart stalled/regressed replication forks. The polypeptide is ATPase family AAA domain-containing protein 5 (Homo sapiens (Human)).